The chain runs to 149 residues: Transcriptional repressor NrdR (149 aa).

A zinc finger lies at 3–34 (CPFCGTQDTKVIDSRLVADGASVRRRRECNHC). The 91-residue stretch at 49 to 139 (PRVIKTDGSR…VYRSFEDIRE (91 aa)) folds into the ATP-cone domain.

Belongs to the NrdR family. The cofactor is Zn(2+).

In terms of biological role, negatively regulates transcription of bacterial ribonucleotide reductase nrd genes and operons by binding to NrdR-boxes. This Idiomarina loihiensis (strain ATCC BAA-735 / DSM 15497 / L2-TR) protein is Transcriptional repressor NrdR.